Consider the following 262-residue polypeptide: Acyl-coenzyme A diphosphatase FITM2 (262 aa).

Over 1 to 23 (MEHLERCAWVLRGTLVRSAVRKY) the chain is Cytoplasmic. A helical transmembrane segment spans residues 24-44 (LPWALAASMLAGSLLKELSPL). The Lumenal segment spans residues 45-57 (PESYLSNKRNVLN). Residues 58 to 78 (VYFVKVAWAWTFCLLLPFIAL) form a helical membrane-spanning segment. Topologically, residues 79 to 93 (TNYHLTGKAGLVLRR) are cytoplasmic. The chain crosses the membrane as a helical span at residues 94–114 (LSTLLVGTAIWYVCTAIFSNI). The Lumenal portion of the chain corresponds to 115 to 145 (EHYTGSCYQSPALEGERKEHQSKQQCHGEGG). The chain crosses the membrane as a helical span at residues 146 to 166 (FWHGFDISGHSFLLTFCALMI). The active site involves histidine 155. The Cytoplasmic segment spans residues 167–190 (VEEMAVLHEVKTDRNHCLHAAITT). The helical transmembrane segment at 191 to 211 (LVVALGFLTFIWVWMFLCTAV) threads the bilayer. Residues 212-218 (YFHNLSQ) lie on the Lumenal side of the membrane. Histidine 214 is a catalytic residue. A helical membrane pass occupies residues 219–239 (KVFGTLFGLLGWYGTYGCWYL). Topologically, residues 240-262 (KSFSPGLPPQSSSLNLKQDTYKK) are cytoplasmic.

It belongs to the FIT family. FIT2 subfamily.

It localises to the endoplasmic reticulum membrane. It carries out the reaction an acyl-CoA + H2O = an acyl-4'-phosphopantetheine + adenosine 3',5'-bisphosphate + 2 H(+). It catalyses the reaction (9Z)-octadecenoyl-CoA + H2O = S-(9Z-octadecenoyl)-4'-phosphopantetheine + adenosine 3',5'-bisphosphate + 2 H(+). The enzyme catalyses (5Z,8Z,11Z,14Z)-eicosatetraenoyl-CoA + H2O = S-(5Z,8Z,11Z,14Z-eicosatetraenoyl)-4'-phosphopantetheine + adenosine 3',5'-bisphosphate + 2 H(+). The catalysed reaction is hexadecanoyl-CoA + H2O = S-hexadecanoyl-4'-phosphopantetheine + adenosine 3',5'-bisphosphate + 2 H(+). Functionally, fatty acyl-coenzyme A (CoA) diphosphatase that hydrolyzes fatty acyl-CoA to yield acyl-4'-phosphopantetheine and adenosine 3',5'-bisphosphate. Preferentially hydrolyzes unsaturated long-chain acyl-CoA substrates such as oleoyl-CoA/(9Z)-octadecenoyl-CoA and arachidonoyl-CoA/(5Z,8Z,11Z,14Z)-eicosatetraenoyl-CoA in the endoplasmic reticulum (ER) lumen. This catalytic activity is required for maintaining ER structure and for lipid droplets (LDs) biogenesis, which are lipid storage organelles involved in maintaining lipid and energy homeostasis. Directly binds to diacylglycerol (DAGs) and triacylglycerol, which is also important for LD biogenesis. May support directional budding of nacent LDs from the ER into the cytosol by reducing DAG levels at sites of LD formation. Plays a role in the regulation of cell morphology and cytoskeletal organization. The polypeptide is Acyl-coenzyme A diphosphatase FITM2 (Bos taurus (Bovine)).